The sequence spans 287 residues: Ketoacyl reductase HetN (287 aa).

Position 11–35 (11–35 (LTGASRGLGVYIARALAKEQATVVC)) interacts with NAD(+). Serine 142 is a binding site for substrate. Tyrosine 155 acts as the Proton acceptor in catalysis.

It belongs to the short-chain dehydrogenases/reductases (SDR) family.

May be involved in repressing heterocyst differentiation and may be essential for preventing all vegetative cells from differentiating. In Nostoc sp. (strain PCC 7120 / SAG 25.82 / UTEX 2576), this protein is Ketoacyl reductase HetN (hetN).